Here is a 339-residue protein sequence, read N- to C-terminus: MFSQTLSKIINRKDLSREEMDRIFSDIFSGNLTDAQIGAFMAALATKGETFEELAGAAEAMRRKATRIQAASPVVVDTCGTGGDGAHTFNISTTSAFVVAGAGICVAKHGNRSVSSKCGSADVLEALGVKLDTQPEVAEEAVNEIGIGFLFAPLFHGAMKYAIVPRKELGVRTIFNMLGPLTNPAAANCQVLGVFAPQLTEMFADALNLLGARRAFVVHGHDGLDEISVCASTRVSELNDGRVQTYDISPEHFFEDRARPEDMAGGTPSENAQITRHILSGKEKGPRRNVVVVNAGAALVAAGKAEDLKAGVALAGQIIDSGKAHEKLEQLIEFTKSNG.

Residues G80, 83 to 84 (GD), T88, 90 to 93 (NIST), 108 to 116 (KHGNRSVSS), and S120 each bind 5-phospho-alpha-D-ribose 1-diphosphate. An anthranilate-binding site is contributed by G80. Residue S92 coordinates Mg(2+). N111 provides a ligand contact to anthranilate. R166 provides a ligand contact to anthranilate. Mg(2+) contacts are provided by D225 and E226.

Belongs to the anthranilate phosphoribosyltransferase family. As to quaternary structure, homodimer. The cofactor is Mg(2+).

It carries out the reaction N-(5-phospho-beta-D-ribosyl)anthranilate + diphosphate = 5-phospho-alpha-D-ribose 1-diphosphate + anthranilate. It functions in the pathway amino-acid biosynthesis; L-tryptophan biosynthesis; L-tryptophan from chorismate: step 2/5. Catalyzes the transfer of the phosphoribosyl group of 5-phosphorylribose-1-pyrophosphate (PRPP) to anthranilate to yield N-(5'-phosphoribosyl)-anthranilate (PRA). The sequence is that of Anthranilate phosphoribosyltransferase from Desulfosudis oleivorans (strain DSM 6200 / JCM 39069 / Hxd3) (Desulfococcus oleovorans).